The following is a 333-amino-acid chain: cGAMP-activated phospholipase (333 aa).

In terms of domain architecture, PNPLA spans 10–191; that stretch reads LALSGGGYRG…VGNAPGLFGL (182 aa). Positions 14–19 match the GXGXXG motif; sequence GGGYRG. The GXSXG signature appears at 46-50; the sequence is GTSAG. Residue Ser-48 is the Nucleophile of the active site. Asp-178 (proton acceptor) is an active-site residue. The DGA/G motif lies at 178-180; it reads DGG.

This sequence belongs to the patatin family.

It catalyses the reaction a 1,2-diacyl-sn-glycero-3-phosphocholine + H2O = a 2-acyl-sn-glycero-3-phosphocholine + a fatty acid + H(+). It carries out the reaction 1,2-di-(9Z-octadecenoyl)-sn-glycero-3-phosphoethanolamine + 2 H2O = sn-glycero-3-phosphoethanolamine + 2 (9Z)-octadecenoate + 2 H(+). Its activity is regulated as follows. Phospholipase activity is specifically activated upon cGAMP binding, which is produced by the cognate cyclic nucleotide synthase encoded in the same operon. Is not activated by cyclic dinucleotides 2',3'-cGAMP, c-diAMP or 3',3'-c-diGMP. Its function is as follows. Effector phospholipase of a CBASS antiviral system. CBASS (cyclic oligonucleotide-based antiphage signaling system) provides immunity against bacteriophages. The CD-NTase protein (CdnA) synthesizes cyclic nucleotides in response to infection; these serve as specific second messenger signals. The signals activate a diverse range of effectors, leading to bacterial cell death and thus abortive phage infection. A type II-A(GA) CBASS system. Functionally, phospholipase that is activated upon binding to the cyclic dinucleotide (CDN) second messenger 3',3'-cyclic GMP-AMP (cGAMP). Degrades phospholipids in the cell membrane. In terms of biological role, the capV-cdnA-cap2-cap3 operon provides about 10(4)-fold protection in strain BWHPSA011 against infection by phage PaMx41. In P.aeruginosa strain PAO1 it confers protection against phages PaMx41 and JBD18 but not JBD67 (JBD18 and JBD67 do not replicate in BWHPSA011 / Pa011). When acb2 in JBD67 is deleted this CBASS operon then protects against JDB67 also. This CBASS system limits prophage induction of lysogenized JBD67 as well as viral lytic replication. The sequence is that of cGAMP-activated phospholipase from Pseudomonas aeruginosa (strain BWHPSA011 / Pa011).